Consider the following 216-residue polypeptide: Late expression factor 2 (216 aa).

Residues 67–88 (SRGESAPAPAAAAASAGQPGRK) are disordered. Residues 71–82 (SAPAPAAAAASA) are compositionally biased toward low complexity.

This sequence belongs to the baculoviridae LEF-2 family.

Functionally, required for late and very late gene expression. Specifically required for expression from the vp39 and polh promoters. The chain is Late expression factor 2 (LEF-2) from Lepidoptera (butterflies and moths).